The primary structure comprises 155 residues: SsrA-binding protein (155 aa).

The segment covering 135 to 147 has biased composition (basic and acidic residues); it reads TIKRRDQERDIKK. The interval 135–155 is disordered; the sequence is TIKRRDQERDIKKQMKHYNAR.

This sequence belongs to the SmpB family.

It localises to the cytoplasm. Functionally, required for rescue of stalled ribosomes mediated by trans-translation. Binds to transfer-messenger RNA (tmRNA), required for stable association of tmRNA with ribosomes. tmRNA and SmpB together mimic tRNA shape, replacing the anticodon stem-loop with SmpB. tmRNA is encoded by the ssrA gene; the 2 termini fold to resemble tRNA(Ala) and it encodes a 'tag peptide', a short internal open reading frame. During trans-translation Ala-aminoacylated tmRNA acts like a tRNA, entering the A-site of stalled ribosomes, displacing the stalled mRNA. The ribosome then switches to translate the ORF on the tmRNA; the nascent peptide is terminated with the 'tag peptide' encoded by the tmRNA and targeted for degradation. The ribosome is freed to recommence translation, which seems to be the essential function of trans-translation. The sequence is that of SsrA-binding protein from Streptococcus pyogenes serotype M12 (strain MGAS2096).